Here is a 151-residue protein sequence, read N- to C-terminus: Transcriptional repressor NrdR (151 aa).

Residues Cys-3–Cys-34 fold into a zinc finger. Positions Ile-49–Thr-139 constitute an ATP-cone domain.

Belongs to the NrdR family. The cofactor is Zn(2+).

Functionally, negatively regulates transcription of bacterial ribonucleotide reductase nrd genes and operons by binding to NrdR-boxes. The polypeptide is Transcriptional repressor NrdR (Acetivibrio thermocellus (strain ATCC 27405 / DSM 1237 / JCM 9322 / NBRC 103400 / NCIMB 10682 / NRRL B-4536 / VPI 7372) (Clostridium thermocellum)).